The sequence spans 77 residues: Cell division topological specificity factor (77 aa).

It belongs to the MinE family.

Prevents the cell division inhibition by proteins MinC and MinD at internal division sites while permitting inhibition at polar sites. This ensures cell division at the proper site by restricting the formation of a division septum at the midpoint of the long axis of the cell. The sequence is that of Cell division topological specificity factor from Helicobacter pylori (strain P12).